The following is a 370-amino-acid chain: UDP-N-acetylglucosamine--N-acetylmuramyl-(pentapeptide) pyrophosphoryl-undecaprenol N-acetylglucosamine transferase (370 aa).

Residues 10–12 (TGG), Asn126, Ser200, Ile255, and Gln300 each bind UDP-N-acetyl-alpha-D-glucosamine.

Belongs to the glycosyltransferase 28 family. MurG subfamily.

It localises to the cell membrane. The catalysed reaction is Mur2Ac(oyl-L-Ala-gamma-D-Glu-L-Lys-D-Ala-D-Ala)-di-trans,octa-cis-undecaprenyl diphosphate + UDP-N-acetyl-alpha-D-glucosamine = beta-D-GlcNAc-(1-&gt;4)-Mur2Ac(oyl-L-Ala-gamma-D-Glu-L-Lys-D-Ala-D-Ala)-di-trans,octa-cis-undecaprenyl diphosphate + UDP + H(+). The protein operates within cell wall biogenesis; peptidoglycan biosynthesis. Functionally, cell wall formation. Catalyzes the transfer of a GlcNAc subunit on undecaprenyl-pyrophosphoryl-MurNAc-pentapeptide (lipid intermediate I) to form undecaprenyl-pyrophosphoryl-MurNAc-(pentapeptide)GlcNAc (lipid intermediate II). This Lactobacillus johnsonii (strain CNCM I-12250 / La1 / NCC 533) protein is UDP-N-acetylglucosamine--N-acetylmuramyl-(pentapeptide) pyrophosphoryl-undecaprenol N-acetylglucosamine transferase.